Reading from the N-terminus, the 318-residue chain is NLP effector protein 7 (318 aa).

Residues 1 to 19 (MRLFAFLWSSVAFLSTVQA) form the signal peptide. The span at 23-41 (QTASQTQDDSSTPTPTPTD) shows a compositional bias: low complexity. Disordered regions lie at residues 23 to 42 (QTAS…PTDK) and 51 to 96 (RTKT…TPDP). Polar residues predominate over residues 55–65 (PMATPNRTIMP). Asn-60 carries an N-linked (GlcNAc...) asparagine glycan. Positions 73–96 (TEPPTPEPTYLPTPSPTPAPTPDP) are enriched in pro residues. Positions 185–195 (AIMYSWYFPKD) match the Conserved undecapeptide motif I motif. Residues 202–208 (GHRHDWE) carry the Hepta-peptide GHRHDWE motif II motif.

This sequence belongs to the Necrosis inducing protein (NPP1) family.

The protein resides in the secreted. Its function is as follows. Secreted effector that contributes moderately to virulence during infection by P.capsici. Does not cause visible reaction of C.annuum for several days after inoculation, but by 7 days after inoculation, small necrotic lesions become visible. Leads only to chlorotic areas, without necrosis at 7 days after non-host N.benthamiana leaves infection. The sequence is that of NLP effector protein 7 from Phytophthora capsici.